Here is a 97-residue protein sequence, read N- to C-terminus: Cytochrome c2 iso-2 (97 aa).

Heme c-binding residues include C10, C13, H14, and M75.

This sequence belongs to the cytochrome c family. In terms of processing, binds 1 heme c group covalently per subunit.

Functionally, cytochrome c2 is found mainly in purple, non-sulfur, photosynthetic bacteria where it functions as the electron donor to the oxidized bacteriochlorophyll in the photophosphorylation pathway. However, it may also have a role in the respiratory chain and is found in some non-photosynthetic bacteria. This is Cytochrome c2 iso-2 from Magnetospirillum molischianum (Rhodospirillum molischianum).